We begin with the raw amino-acid sequence, 308 residues long: D-alanine--D-alanine ligase (308 aa).

Residues 103–302 (KTVMATAGVP…FDELVQWMVE (200 aa)) enclose the ATP-grasp domain. Residue 130–184 (MAPPYVIKPVADGSSVGVFIVTEDQAHPPQELFRDDWPHGEELLVEKYIAGRELT) coordinates ATP. 3 residues coordinate Mg(2+): Asp252, Glu269, and Asn271.

It belongs to the D-alanine--D-alanine ligase family. The cofactor is Mg(2+). It depends on Mn(2+) as a cofactor.

It localises to the cytoplasm. The enzyme catalyses 2 D-alanine + ATP = D-alanyl-D-alanine + ADP + phosphate + H(+). It functions in the pathway cell wall biogenesis; peptidoglycan biosynthesis. Functionally, cell wall formation. The polypeptide is D-alanine--D-alanine ligase (Afipia carboxidovorans (strain ATCC 49405 / DSM 1227 / KCTC 32145 / OM5) (Oligotropha carboxidovorans)).